The chain runs to 276 residues: Flagellin FljJ (276 aa).

Residues arginine 51 to glycine 80 form a disordered region. Over residues alanine 61 to arginine 75 the composition is skewed to basic and acidic residues.

It belongs to the bacterial flagellin family. As to quaternary structure, in C.crescentus, the flagellar filament is composed of multiple flagellins of 29 kDa; 27 kDa and 25 kDa.

It is found in the secreted. It localises to the bacterial flagellum. Flagellin is the subunit protein which polymerizes to form the filaments of bacterial flagella. The chain is Flagellin FljJ (fljJ) from Caulobacter vibrioides (strain ATCC 19089 / CIP 103742 / CB 15) (Caulobacter crescentus).